The primary structure comprises 141 residues: Hemoglobin subunit alpha-D (141 aa).

Residues 1-141 (VLTHEDCELL…VGDMLAEKYR (141 aa)) enclose the Globin domain. Heme b-binding residues include His58 and His87.

The protein belongs to the globin family. As to quaternary structure, there are three forms of hemoglobin in Sphenodon: A, A' and D. Hb A is a tetramer of two alpha-A and two beta-1, Hb A' is a tetramer of two alpha-a and two beta-2, Hb D is a tetramer of two alpha-D and two beta-2. In terms of tissue distribution, red blood cells.

In terms of biological role, involved in oxygen transport from the lung to the various peripheral tissues. In Sphenodon punctatus (Tuatara), this protein is Hemoglobin subunit alpha-D (HBAD).